A 321-amino-acid chain; its full sequence is Phospho-N-acetylmuramoyl-pentapeptide-transferase (321 aa).

10 helical membrane-spanning segments follow: residues 1-21, 50-70, 76-96, 112-132, 140-160, 173-193, 198-218, 225-245, 250-270, and 300-320; these read MVYL…PVLI, MGGL…IIFI, IILL…DDYI, FLAQ…FNLT, IPFI…IVFW, GLDG…AIMA, ATSI…FLPF, VFMG…ISIM, LSLL…MIQV, and VVTV…WIGV.

The protein belongs to the glycosyltransferase 4 family. MraY subfamily. The cofactor is Mg(2+).

It is found in the cell membrane. The enzyme catalyses UDP-N-acetyl-alpha-D-muramoyl-L-alanyl-gamma-D-glutamyl-L-lysyl-D-alanyl-D-alanine + di-trans,octa-cis-undecaprenyl phosphate = Mur2Ac(oyl-L-Ala-gamma-D-Glu-L-Lys-D-Ala-D-Ala)-di-trans,octa-cis-undecaprenyl diphosphate + UMP. Its pathway is cell wall biogenesis; peptidoglycan biosynthesis. Catalyzes the initial step of the lipid cycle reactions in the biosynthesis of the cell wall peptidoglycan: transfers peptidoglycan precursor phospho-MurNAc-pentapeptide from UDP-MurNAc-pentapeptide onto the lipid carrier undecaprenyl phosphate, yielding undecaprenyl-pyrophosphoryl-MurNAc-pentapeptide, known as lipid I. The chain is Phospho-N-acetylmuramoyl-pentapeptide-transferase from Staphylococcus saprophyticus subsp. saprophyticus (strain ATCC 15305 / DSM 20229 / NCIMB 8711 / NCTC 7292 / S-41).